The primary structure comprises 110 residues: Protein mistic (110 aa).

Residues 1-7 (MFCTFFE) are Cytoplasmic-facing. A helical transmembrane segment spans residues 8-22 (KHHRKWDILLEKSTG). Over 23 to 31 (VMEAMKVTS) the chain is Extracellular. The helical transmembrane segment at 32-55 (EEKEQLSTAIDRMNEGLDAFIQLY) threads the bilayer. At 56 to 66 (NESEIDEPLIQ) the chain is on the cytoplasmic side. The chain crosses the membrane as a helical span at residues 67–81 (LDDDTAELMKQARDM). At 82 to 88 (YGQEKLN) the chain is on the extracellular side. A helical transmembrane segment spans residues 89–102 (EKLNTIIKQILSIS). Over 103-110 (VSEEGEKE) the chain is Cytoplasmic.

As to quaternary structure, monomer.

Its subcellular location is the cell membrane. Its function is as follows. Chaperone that facilitates the production and integration of integral membrane proteins into the bacterial lipid bilayer. The chain is Protein mistic (mstX) from Bacillus subtilis (strain 168).